Here is a 295-residue protein sequence, read N- to C-terminus: Acetylglutamate kinase (295 aa).

Residues glycine 61–glycine 62, arginine 83, and asparagine 182 each bind substrate.

Belongs to the acetylglutamate kinase family. ArgB subfamily.

It is found in the cytoplasm. The enzyme catalyses N-acetyl-L-glutamate + ATP = N-acetyl-L-glutamyl 5-phosphate + ADP. Its pathway is amino-acid biosynthesis; L-arginine biosynthesis; N(2)-acetyl-L-ornithine from L-glutamate: step 2/4. In terms of biological role, catalyzes the ATP-dependent phosphorylation of N-acetyl-L-glutamate. The chain is Acetylglutamate kinase from Clostridium acetobutylicum (strain ATCC 824 / DSM 792 / JCM 1419 / IAM 19013 / LMG 5710 / NBRC 13948 / NRRL B-527 / VKM B-1787 / 2291 / W).